We begin with the raw amino-acid sequence, 148 residues long: uncharacterized protein (148 aa).

This is an uncharacterized protein from Bacillus subtilis (Bacteriophage SP01).